A 348-amino-acid chain; its full sequence is MKPPARMVSPERRSDDVGDTALRPQQLSEFVGQQQARANLSIFIEAARKRGEALDHVLFVGPPGLGKTTLAQIVARELGVGFRATSGPVIAKAGDLAALLTNLEERDVLFIDEIHRLSPAVEEVLYPAMEDFQLDLIIGEGPAARSVKIDLAKFTLVGATTRAGLLTNPLRDRFGIPIRLNFYTVEELEGIVTRGARVLGVGMTADGANEIARRARGTPRIAGRLLRRVRDFASAANADAIDRAIADHALSALEVDAAGLDAMDRRYLTTIALNYGGGPVGVETMAAALSEPRDAIEDIIEPYLIQCGYLQRTPRGRLLTSHAFRHLGMAEPSRDASQFGLFGSEDDA.

Residues 1 to 20 (MKPPARMVSPERRSDDVGDT) form a disordered region. The interval 1 to 183 (MKPPARMVSP…FGIPIRLNFY (183 aa)) is large ATPase domain (RuvB-L). ATP-binding positions include Leu-22, Arg-23, Gly-64, Lys-67, Thr-68, Thr-69, 130-132 (EDF), Arg-173, Tyr-183, and Arg-220. Thr-68 serves as a coordination point for Mg(2+). The interval 184-254 (TVEELEGIVT…IADHALSALE (71 aa)) is small ATPAse domain (RuvB-S). The interval 257–348 (AAGLDAMDRR…FGLFGSEDDA (92 aa)) is head domain (RuvB-H). The DNA site is built by Arg-293, Arg-312, and Arg-317.

The protein belongs to the RuvB family. Homohexamer. Forms an RuvA(8)-RuvB(12)-Holliday junction (HJ) complex. HJ DNA is sandwiched between 2 RuvA tetramers; dsDNA enters through RuvA and exits via RuvB. An RuvB hexamer assembles on each DNA strand where it exits the tetramer. Each RuvB hexamer is contacted by two RuvA subunits (via domain III) on 2 adjacent RuvB subunits; this complex drives branch migration. In the full resolvosome a probable DNA-RuvA(4)-RuvB(12)-RuvC(2) complex forms which resolves the HJ.

Its subcellular location is the cytoplasm. It carries out the reaction ATP + H2O = ADP + phosphate + H(+). Functionally, the RuvA-RuvB-RuvC complex processes Holliday junction (HJ) DNA during genetic recombination and DNA repair, while the RuvA-RuvB complex plays an important role in the rescue of blocked DNA replication forks via replication fork reversal (RFR). RuvA specifically binds to HJ cruciform DNA, conferring on it an open structure. The RuvB hexamer acts as an ATP-dependent pump, pulling dsDNA into and through the RuvAB complex. RuvB forms 2 homohexamers on either side of HJ DNA bound by 1 or 2 RuvA tetramers; 4 subunits per hexamer contact DNA at a time. Coordinated motions by a converter formed by DNA-disengaged RuvB subunits stimulates ATP hydrolysis and nucleotide exchange. Immobilization of the converter enables RuvB to convert the ATP-contained energy into a lever motion, pulling 2 nucleotides of DNA out of the RuvA tetramer per ATP hydrolyzed, thus driving DNA branch migration. The RuvB motors rotate together with the DNA substrate, which together with the progressing nucleotide cycle form the mechanistic basis for DNA recombination by continuous HJ branch migration. Branch migration allows RuvC to scan DNA until it finds its consensus sequence, where it cleaves and resolves cruciform DNA. The chain is Holliday junction branch migration complex subunit RuvB from Bradyrhizobium sp. (strain BTAi1 / ATCC BAA-1182).